The sequence spans 466 residues: Asparagine--tRNA ligase (466 aa).

Belongs to the class-II aminoacyl-tRNA synthetase family. As to quaternary structure, homodimer.

Its subcellular location is the cytoplasm. It catalyses the reaction tRNA(Asn) + L-asparagine + ATP = L-asparaginyl-tRNA(Asn) + AMP + diphosphate + H(+). The chain is Asparagine--tRNA ligase from Shewanella baltica (strain OS185).